We begin with the raw amino-acid sequence, 80 residues long: Exodeoxyribonuclease 7 small subunit (80 aa).

Belongs to the XseB family. As to quaternary structure, heterooligomer composed of large and small subunits.

It localises to the cytoplasm. The enzyme catalyses Exonucleolytic cleavage in either 5'- to 3'- or 3'- to 5'-direction to yield nucleoside 5'-phosphates.. Bidirectionally degrades single-stranded DNA into large acid-insoluble oligonucleotides, which are then degraded further into small acid-soluble oligonucleotides. The sequence is that of Exodeoxyribonuclease 7 small subunit from Vibrio cholerae serotype O1 (strain ATCC 39541 / Classical Ogawa 395 / O395).